A 141-amino-acid polypeptide reads, in one-letter code: Large ribosomal subunit protein uL11 (141 aa).

Belongs to the universal ribosomal protein uL11 family. As to quaternary structure, part of the ribosomal stalk of the 50S ribosomal subunit. Interacts with L10 and the large rRNA to form the base of the stalk. L10 forms an elongated spine to which L12 dimers bind in a sequential fashion forming a multimeric L10(L12)X complex. In terms of processing, one or more lysine residues are methylated.

In terms of biological role, forms part of the ribosomal stalk which helps the ribosome interact with GTP-bound translation factors. This chain is Large ribosomal subunit protein uL11, found in Campylobacter concisus (strain 13826).